The following is a 130-amino-acid chain: Protein ApaG (130 aa).

The region spanning 3–127 (RAVTRHIEVT…FSLDSPDGKR (125 aa)) is the ApaG domain.

The chain is Protein ApaG from Bradyrhizobium sp. (strain ORS 278).